Here is a 360-residue protein sequence, read N- to C-terminus: Phenylalanine--tRNA ligase alpha subunit (360 aa).

Glutamate 260 contributes to the Mg(2+) binding site.

It belongs to the class-II aminoacyl-tRNA synthetase family. Phe-tRNA synthetase alpha subunit type 1 subfamily. Tetramer of two alpha and two beta subunits. The cofactor is Mg(2+).

Its subcellular location is the cytoplasm. The catalysed reaction is tRNA(Phe) + L-phenylalanine + ATP = L-phenylalanyl-tRNA(Phe) + AMP + diphosphate + H(+). This Methylobacterium radiotolerans (strain ATCC 27329 / DSM 1819 / JCM 2831 / NBRC 15690 / NCIMB 10815 / 0-1) protein is Phenylalanine--tRNA ligase alpha subunit.